A 92-amino-acid polypeptide reads, in one-letter code: MARSLKKNPFVADNLFKKIDKLNIKAEKEIIITWSRGSTIIPIMVGHTIAIHTGKEHLPIYIMDHMVGHKLGEFASTFNFRGHAKSDNRSRR.

This sequence belongs to the universal ribosomal protein uS19 family.

Its subcellular location is the plastid. Its function is as follows. Protein S19 forms a complex with S13 that binds strongly to the 16S ribosomal RNA. This is Small ribosomal subunit protein uS19c from Cuscuta exaltata (Tall dodder).